The sequence spans 132 residues: Rubredoxin-1 (132 aa).

Positions 1 to 53 (MSRYQCPDCQYIYDENKGEPHEGFHPNTSWNDIPKDWACPDCAVRDKVDFIFL) constitute a Rubredoxin-like domain. Fe cation contacts are provided by Cys-6, Cys-9, Cys-39, and Cys-42. The interval 108-132 (TEVLDQASTPQVVRKSSTRKKMRNK) is disordered. Positions 113 to 122 (QASTPQVVRK) are enriched in polar residues. Basic residues predominate over residues 123-132 (SSTRKKMRNK).

Belongs to the rubredoxin family. It depends on Fe(3+) as a cofactor.

It localises to the cytoplasm. It functions in the pathway hydrocarbon metabolism; alkane degradation. Its function is as follows. Not known. Probably involved in an electron transport pathway, but not required for the hydrocarbon hydroxylating system. Seems to be non-functional. This Ectopseudomonas oleovorans (Pseudomonas oleovorans) protein is Rubredoxin-1 (alkF).